A 459-amino-acid chain; its full sequence is Probable Delta(5) fatty acid desaturase C (459 aa).

The Cytochrome b5 heme-binding domain maps to 9-87 (KKLYSWKEIS…LKQYEIGQVS (79 aa)). His-45 and His-68 together coordinate heme. The next 2 helical transmembrane spans lie at 121 to 141 (FAFGIIARLIFVYWFLITSYY) and 151 to 171 (FYLNCLLAIVYSLSNSLFSLH). The Histidine box-1 motif lies at 174 to 178 (HDACH). The helical transmembrane segment at 187–207 (VWKWLGATYDLFIGASFFYWC) threads the bilayer. Residues 210-215 (HVIGHH) carry the Histidine box-2 motif. The next 2 helical transmembrane spans lie at 289-309 (FEIISFIIGKLVFIVFRFIIP) and 315-335 (LVNLLTYFFIAEFFFGLYLSF). A Histidine box-3 motif is present at residues 394 to 398 (QVVHH).

Belongs to the fatty acid desaturase type 1 family. Fe cation is required as a cofactor.

The protein localises to the membrane. The chain is Probable Delta(5) fatty acid desaturase C from Dictyostelium discoideum (Social amoeba).